We begin with the raw amino-acid sequence, 216 residues long: MPELVFFSGTMDCGKSTLALQIEHNRSARGLAGMIFTRDDRAGEGKLSSRLGLVTDAVEVGDGQDLYAHVVDHLSQGGRVDYVIADEAQFLAPDQIDQLARVVDDLDVDVYAFGITTDFRSKLFPGSQRLVELADRVEVLQVEALCWCGARATHNARTVGGVMVVEGAQVVVGDVAQSPDEIGYEVLCRRHHRRRMTSATARAAALSPDVLPVTAT.

Residues 9-16 (GTMDCGKS) and 86-89 (DEAQ) contribute to the ATP site. The active-site Proton acceptor is the glutamate 87.

Belongs to the thymidine kinase family. As to quaternary structure, homotetramer.

It is found in the cytoplasm. The catalysed reaction is thymidine + ATP = dTMP + ADP + H(+). In Streptomyces coelicolor (strain ATCC BAA-471 / A3(2) / M145), this protein is Thymidine kinase.